The chain runs to 341 residues: Phosphoribosylformylglycinamidine cyclo-ligase (341 aa).

This sequence belongs to the AIR synthase family.

It is found in the cytoplasm. It catalyses the reaction 2-formamido-N(1)-(5-O-phospho-beta-D-ribosyl)acetamidine + ATP = 5-amino-1-(5-phospho-beta-D-ribosyl)imidazole + ADP + phosphate + H(+). It participates in purine metabolism; IMP biosynthesis via de novo pathway; 5-amino-1-(5-phospho-D-ribosyl)imidazole from N(2)-formyl-N(1)-(5-phospho-D-ribosyl)glycinamide: step 2/2. The sequence is that of Phosphoribosylformylglycinamidine cyclo-ligase from Alkaliphilus oremlandii (strain OhILAs) (Clostridium oremlandii (strain OhILAs)).